A 345-amino-acid chain; its full sequence is S-adenosylmethionine:tRNA ribosyltransferase-isomerase (345 aa).

This sequence belongs to the QueA family. Monomer.

It is found in the cytoplasm. The catalysed reaction is 7-aminomethyl-7-carbaguanosine(34) in tRNA + S-adenosyl-L-methionine = epoxyqueuosine(34) in tRNA + adenine + L-methionine + 2 H(+). Its pathway is tRNA modification; tRNA-queuosine biosynthesis. In terms of biological role, transfers and isomerizes the ribose moiety from AdoMet to the 7-aminomethyl group of 7-deazaguanine (preQ1-tRNA) to give epoxyqueuosine (oQ-tRNA). The protein is S-adenosylmethionine:tRNA ribosyltransferase-isomerase of Shewanella sp. (strain W3-18-1).